The chain runs to 136 residues: UPF0275 protein PM0493 (136 aa).

The protein belongs to the UPF0275 family.

The polypeptide is UPF0275 protein PM0493 (Pasteurella multocida (strain Pm70)).